The chain runs to 176 residues: ATP-dependent protease subunit HslV (176 aa).

Thr2 is a catalytic residue. The Na(+) site is built by Gly157, Cys160, and Thr163.

Belongs to the peptidase T1B family. HslV subfamily. As to quaternary structure, a double ring-shaped homohexamer of HslV is capped on each side by a ring-shaped HslU homohexamer. The assembly of the HslU/HslV complex is dependent on binding of ATP.

The protein localises to the cytoplasm. The catalysed reaction is ATP-dependent cleavage of peptide bonds with broad specificity.. With respect to regulation, allosterically activated by HslU binding. Functionally, protease subunit of a proteasome-like degradation complex believed to be a general protein degrading machinery. The chain is ATP-dependent protease subunit HslV from Ectopseudomonas mendocina (strain ymp) (Pseudomonas mendocina).